A 99-amino-acid polypeptide reads, in one-letter code: Acylphosphatase-2 (99 aa).

N-acetylserine is present on Ser-2. Positions 9-99 (SVDYEVFGRV…LEYSSFNIRY (91 aa)) constitute an Acylphosphatase-like domain. Active-site residues include Arg-24 and Asn-42. A Phosphoserine modification is found at Ser-93.

Belongs to the acylphosphatase family.

The enzyme catalyses an acyl phosphate + H2O = a carboxylate + phosphate + H(+). Its function is as follows. Its physiological role is not yet clear. This chain is Acylphosphatase-2 (ACYP2), found in Bos taurus (Bovine).